The sequence spans 547 residues: Probable aquaporin-5 (547 aa).

The span at 1 to 13 (MSSSILNNRSARS) shows a compositional bias: polar residues. Residues 1 to 208 (MSSSILNNRS…DPRIPPNDRR (208 aa)) are disordered. The Cytoplasmic segment spans residues 1–269 (MSSSILNNRS…QWMNSNFKNH (269 aa)). Residues 15-32 (PAGANPAFNPPAEASSSS) show a composition bias toward low complexity. Basic and acidic residues-rich tracts occupy residues 152-169 (EYER…DRYT) and 198-208 (DDPRIPPNDRR). The helical transmembrane segment at 270–290 (FVAGVGEFIGTTMFLFFAFAG) threads the bilayer. At 291–316 (TEVANIQADTTNRTTTGESTGSLNVS) the chain is on the extracellular side. 2 N-linked (GlcNAc...) asparagine glycosylation sites follow: Asn-302 and Asn-314. A helical transmembrane segment spans residues 317 to 337 (KLLYISIIFGFSLMVNVWVFF). The Cytoplasmic segment spans residues 338 to 363 (RISGGLFNPAVTMAMLMVKAISVTRA). The NPA 1 motif lies at 345 to 347 (NPA). A helical transmembrane segment spans residues 364 to 384 (IVLFLAQILGSMLASVVVRYL). Residues 385 to 400 (FPETFNVRTTLGGGAS) lie on the Extracellular side of the membrane. A helical transmembrane segment spans residues 401–421 (LVQGVFIEALLTAELVFTIFM). At 422-428 (LAKEKHR) the chain is on the cytoplasmic side. The helical transmembrane segment at 429 to 449 (ATFIAPVGIGLALFIAEMVGV) threads the bilayer. Residues 450 to 475 (QFTGGSLNPARSFGPCVITGSFDTEH) lie on the Extracellular side of the membrane. The NPA 2 signature appears at 457 to 459 (NPA). Residues 476 to 496 (WIYWVGPAIGSLIAVCFYWFI) form a helical membrane-spanning segment. The Cytoplasmic portion of the chain corresponds to 497–547 (KTLEYEMANPGADGDDLNDPTKNPEKRAEIQASKPVPTAAFGSGKTASILS). Positions 510 to 547 (GDDLNDPTKNPEKRAEIQASKPVPTAAFGSGKTASILS) are disordered.

Belongs to the MIP/aquaporin (TC 1.A.8) family.

Its subcellular location is the membrane. It carries out the reaction H2O(in) = H2O(out). In terms of biological role, probable water channel that may have redundant functions with FgAQP3. This chain is Probable aquaporin-5, found in Gibberella zeae (strain ATCC MYA-4620 / CBS 123657 / FGSC 9075 / NRRL 31084 / PH-1) (Wheat head blight fungus).